The following is a 515-amino-acid chain: Fatty acyl-CoA reductase 1 (515 aa).

Topologically, residues Met1–Asn465 are cytoplasmic. Positions Ser451–Phe507 are necessary and sufficient for PEX19-mediated localization into peroxisome membrane. Residues Ile466 to Ile483 traverse the membrane as a helical segment. Residues Ala484–Tyr515 are Peroxisomal-facing.

It belongs to the fatty acyl-CoA reductase family. Interacts with PEX19; PEX19 mediates the targeting of FAR1 to peroxisomes.

The protein localises to the peroxisome membrane. The catalysed reaction is a long-chain fatty acyl-CoA + 2 NADPH + 2 H(+) = a long-chain primary fatty alcohol + 2 NADP(+) + CoA. It carries out the reaction hexadecanoyl-CoA + 2 NADPH + 2 H(+) = hexadecan-1-ol + 2 NADP(+) + CoA. It catalyses the reaction octadecanoyl-CoA + 2 NADPH + 2 H(+) = octadecan-1-ol + 2 NADP(+) + CoA. The enzyme catalyses (9Z)-octadecenoyl-CoA + 2 NADPH + 2 H(+) = (9Z)-octadecen-1-ol + 2 NADP(+) + CoA. The catalysed reaction is (9Z,12Z)-octadecadienoyl-CoA + 2 NADPH + 2 H(+) = (9Z,12Z)-octadecadien-1-ol + 2 NADP(+) + CoA. It carries out the reaction eicosanoyl-CoA + 2 NADPH + 2 H(+) = eicosan-1-ol + 2 NADP(+) + CoA. It catalyses the reaction 16-methylheptadecanoyl-CoA + 2 NADPH + 2 H(+) = 16-methylheptadecan-1-ol + 2 NADP(+) + CoA. The enzyme catalyses 18-methylnonadecanoyl-CoA + 2 NADPH + 2 H(+) = 18-methylnonadecan-1-ol + 2 NADP(+) + CoA. In terms of biological role, catalyzes the reduction of saturated and unsaturated C16 or C18 fatty acyl-CoA to fatty alcohols. It plays an essential role in the production of ether lipids/plasmalogens which synthesis requires fatty alcohols. In parallel, it is also required for wax monoesters production since fatty alcohols also constitute a substrate for their synthesis. This is Fatty acyl-CoA reductase 1 from Pongo abelii (Sumatran orangutan).